Reading from the N-terminus, the 120-residue chain is NAD(P)H-quinone oxidoreductase subunit 3, chloroplastic (120 aa).

Transmembrane regions (helical) follow at residues 9–29, 64–84, and 88–108; these read IFWA…LISG, MFAL…PWAV, and ILGV…VVGS.

Belongs to the complex I subunit 3 family. In terms of assembly, NDH is composed of at least 16 different subunits, 5 of which are encoded in the nucleus.

The protein resides in the plastid. It is found in the chloroplast thylakoid membrane. It catalyses the reaction a plastoquinone + NADH + (n+1) H(+)(in) = a plastoquinol + NAD(+) + n H(+)(out). The enzyme catalyses a plastoquinone + NADPH + (n+1) H(+)(in) = a plastoquinol + NADP(+) + n H(+)(out). Functionally, NDH shuttles electrons from NAD(P)H:plastoquinone, via FMN and iron-sulfur (Fe-S) centers, to quinones in the photosynthetic chain and possibly in a chloroplast respiratory chain. The immediate electron acceptor for the enzyme in this species is believed to be plastoquinone. Couples the redox reaction to proton translocation, and thus conserves the redox energy in a proton gradient. In Nymphaea alba (White water-lily), this protein is NAD(P)H-quinone oxidoreductase subunit 3, chloroplastic.